We begin with the raw amino-acid sequence, 377 residues long: Leukocyte elastase inhibitor (377 aa).

Met1 is modified (N-acetylmethionine).

The protein belongs to the serpin family. Ov-serpin subfamily.

The protein localises to the cytoplasm. Its function is as follows. Regulates the activity of the neutrophil proteases. The polypeptide is Leukocyte elastase inhibitor (serpinb1) (Xenopus tropicalis (Western clawed frog)).